The primary structure comprises 440 residues: 3-phosphoshikimate 1-carboxyvinyltransferase (440 aa).

3-phosphoshikimate-binding residues include Lys26, Ser27, and Arg31. Phosphoenolpyruvate is bound at residue Lys26. The phosphoenolpyruvate site is built by Gly99 and Arg127. Ser172, Gln174, Asp320, and Lys347 together coordinate 3-phosphoshikimate. Gln174 is a phosphoenolpyruvate binding site. The active-site Proton acceptor is Asp320. Positions 351 and 392 each coordinate phosphoenolpyruvate.

This sequence belongs to the EPSP synthase family. As to quaternary structure, monomer.

The protein localises to the cytoplasm. The enzyme catalyses 3-phosphoshikimate + phosphoenolpyruvate = 5-O-(1-carboxyvinyl)-3-phosphoshikimate + phosphate. The protein operates within metabolic intermediate biosynthesis; chorismate biosynthesis; chorismate from D-erythrose 4-phosphate and phosphoenolpyruvate: step 6/7. Its function is as follows. Catalyzes the transfer of the enolpyruvyl moiety of phosphoenolpyruvate (PEP) to the 5-hydroxyl of shikimate-3-phosphate (S3P) to produce enolpyruvyl shikimate-3-phosphate and inorganic phosphate. The chain is 3-phosphoshikimate 1-carboxyvinyltransferase from Xanthomonas oryzae pv. oryzae (strain MAFF 311018).